A 615-amino-acid chain; its full sequence is 1-deoxy-D-xylulose-5-phosphate synthase (615 aa).

Thiamine diphosphate contacts are provided by residues histidine 72 and 113-115 (GHA). Aspartate 144 contributes to the Mg(2+) binding site. Thiamine diphosphate-binding positions include 145-146 (GA), asparagine 173, tyrosine 281, and glutamate 360. Asparagine 173 is a binding site for Mg(2+).

Belongs to the transketolase family. DXPS subfamily. In terms of assembly, homodimer. Requires Mg(2+) as cofactor. Thiamine diphosphate is required as a cofactor.

It carries out the reaction D-glyceraldehyde 3-phosphate + pyruvate + H(+) = 1-deoxy-D-xylulose 5-phosphate + CO2. It participates in metabolic intermediate biosynthesis; 1-deoxy-D-xylulose 5-phosphate biosynthesis; 1-deoxy-D-xylulose 5-phosphate from D-glyceraldehyde 3-phosphate and pyruvate: step 1/1. Its function is as follows. Catalyzes the acyloin condensation reaction between C atoms 2 and 3 of pyruvate and glyceraldehyde 3-phosphate to yield 1-deoxy-D-xylulose-5-phosphate (DXP). The protein is 1-deoxy-D-xylulose-5-phosphate synthase of Thermus thermophilus (strain ATCC BAA-163 / DSM 7039 / HB27).